A 564-amino-acid polypeptide reads, in one-letter code: Potassium-transporting ATPase potassium-binding subunit (564 aa).

The next 10 membrane-spanning stretches (helical) occupy residues 4–24 (YDYW…PFLG), 67–87 (TLAL…ILLF), 135–155 (VGLT…LVAL), 179–199 (LYGL…QGVP), 258–278 (FEVA…GHYV), 286–306 (AIIG…LWAE), 382–402 (AGLY…GLMI), 420–440 (LLVV…AIAA), 487–507 (LMLG…VLAL), and 528–548 (GPLF…LTFL).

Belongs to the KdpA family. As to quaternary structure, the system is composed of three essential subunits: KdpA, KdpB and KdpC.

Its subcellular location is the cell inner membrane. Its function is as follows. Part of the high-affinity ATP-driven potassium transport (or Kdp) system, which catalyzes the hydrolysis of ATP coupled with the electrogenic transport of potassium into the cytoplasm. This subunit binds the periplasmic potassium ions and delivers the ions to the membrane domain of KdpB through an intramembrane tunnel. In Pseudomonas fluorescens (strain Pf0-1), this protein is Potassium-transporting ATPase potassium-binding subunit.